A 514-amino-acid chain; its full sequence is MAGGFVSQTPGVRNYNYKLTPKVFVTCFIGAFGGLIFGYDLGISGGVTSMEPFLEEFFPYVYKKMKSAHENEYCRFDSQLLTLFTSSLYVAALVSSLFASTITRVFGRKWSMFLGGFTFFIGSAFNGFAQNIAMLLIGRILLGFGVGFANQSVPVYLSEMAPPNLRGAFNNGFQVAIIFGIVVATIINYFTAQMKGNIGWRISLGLACVPAVMIMIGALILPDTPNSLIERGYTEEAKEMLQSIRGTNEVDEEFQDLIDASEESKQVKHPWKNIMLPRYRPQLIMTCFIPFFQQLTGINVITFYAPVLFQTLGFGSKASLLSAMVTGIIELLCTFVSVFTVDRFGRRILFLQGGIQMLVSQIAIGAMIGVKFGVAGTGNIGKSDANLIVALICIYVAGFAWSWGPLGWLVPSEISPLEIRSAAQAINVSVNMFFTFLVAQLFLTMLCHMKFGLFFFFAFFVVIMTIFIYLMLPETKNVPIEEMNRVWKAHWFWGKFIPDEAVNMGAAEMQQKSV.

Topologically, residues 1–22 are cytoplasmic; the sequence is MAGGFVSQTPGVRNYNYKLTPK. 12 helical membrane passes run 23-43, 80-100, 117-137, 140-160, 172-192, 202-222, 283-303, 321-341, 348-368, 387-407, 426-446, and 451-471; these read VFVT…DLGI, LLTL…LFAS, FTFF…MLLI, ILLG…LSEM, GFQV…YFTA, ISLG…LILP, LIMT…VITF, LSAM…VFTV, ILFL…GAMI, LIVA…GPLG, INVS…LTML, and FGLF…IYLM. Over 472 to 514 the chain is Cytoplasmic; that stretch reads LPETKNVPIEEMNRVWKAHWFWGKFIPDEAVNMGAAEMQQKSV.

It belongs to the major facilitator superfamily. Sugar transporter (TC 2.A.1.1) family. As to expression, mostly in flowers and roots, especially in anthers, including pollen, and root tips. Also present in some hydathodes.

Its subcellular location is the cell membrane. Functionally, mediates an active uptake of hexoses, probably by sugar/hydrogen symport. Can transport glucose, methylglucose, galactose, xylose and mannose, but not fructose. This Arabidopsis thaliana (Mouse-ear cress) protein is Sugar transport protein 4 (STP4).